Here is a 511-residue protein sequence, read N- to C-terminus: DEP domain-containing protein 7 (511 aa).

The DEP domain occupies 46–136 (LQTQVEVKKR…SSCSLYRFTT (91 aa)).

It belongs to the DEPDC7 family.

In Pongo abelii (Sumatran orangutan), this protein is DEP domain-containing protein 7 (DEPDC7).